We begin with the raw amino-acid sequence, 407 residues long: MKYDNLLDRFIKYVKVNTRSDPDSETTPSTESQEAFALTILKPEMEAIGLQDVHYNPVNGYLIGTLPANNPTLTRKIGFIAHMDTADFNAENVNPQIIDNYQGGDITLGSSNYKLDPKAFPNLNNYIGQTLITTDGTTLLGADDKSGIAEIMTAIEFLTSQPQIEHCDIKVAFGPDEEIGVGADKFEVADFEVDFAYTMDGGPLGELQYETFSAAALEVTFLGRNVHPGTAKDQMINALQLAIDFHEKLPAKERPEYTDGYQGFYHLTGLTGTVEEARASYIIRDFEEASFEARKVKVENIAQSMNAQLGTKRVLVELNDQYYNMKKVIEKDMTAIELAKEVMEELTIKPVIEPIRGGTDGSKISFMGIPTPNIFAGGENMHGRFEFVSLQTMERAVDVIIGLVCKA.

Residue His82 participates in Zn(2+) binding. Residue Asp84 is part of the active site. Asp143 lines the Zn(2+) pocket. Glu177 acts as the Proton acceptor in catalysis. 3 residues coordinate Zn(2+): Glu178, Asp200, and His382.

It belongs to the peptidase M20B family. Zn(2+) serves as cofactor.

Its subcellular location is the cytoplasm. The catalysed reaction is Release of the N-terminal residue from a tripeptide.. Cleaves the N-terminal amino acid of tripeptides. This Streptococcus pyogenes serotype M4 (strain MGAS10750) protein is Peptidase T.